The sequence spans 1244 residues: Putative late blight resistance protein homolog R1A-4 (1244 aa).

Coiled coils occupy residues 411–434 (RYSD…ESLQ) and 526–548 (PRMN…QLLN). In terms of domain architecture, NB-ARC spans 527–755 (RMNEEIVGFK…ECWEQVANDL (229 aa)). 560–567 (GMPGLGKT) contacts ATP. LRR repeat units lie at residues 978–1004 (LWNL…VWDM), 1079–1103 (PIRL…ISAP), 1127–1150 (LKNL…KVSN), 1153–1178 (FPQL…AFPN), and 1213–1237 (ESVV…NFKL).

It belongs to the disease resistance NB-LRR family.

The protein localises to the cytoplasm. The protein resides in the membrane. Confers resistance to late blight (Phytophthora infestans) races carrying the avirulence gene Avr1. Resistance proteins guard the plant against pathogens that contain an appropriate avirulence protein via an indirect interaction with this avirulence protein. That triggers a defense system including the hypersensitive response, which restricts the pathogen growth. The polypeptide is Putative late blight resistance protein homolog R1A-4 (R1A-4) (Solanum demissum (Wild potato)).